The chain runs to 620 residues: 1-deoxy-D-xylulose-5-phosphate synthase (620 aa).

Residues histidine 80 and 121 to 123 (GHS) each bind thiamine diphosphate. Residue aspartate 152 participates in Mg(2+) binding. Thiamine diphosphate contacts are provided by residues 153–154 (GA), asparagine 181, tyrosine 288, and glutamate 370. Asparagine 181 lines the Mg(2+) pocket.

The protein belongs to the transketolase family. DXPS subfamily. In terms of assembly, homodimer. The cofactor is Mg(2+). Thiamine diphosphate is required as a cofactor.

The catalysed reaction is D-glyceraldehyde 3-phosphate + pyruvate + H(+) = 1-deoxy-D-xylulose 5-phosphate + CO2. The protein operates within metabolic intermediate biosynthesis; 1-deoxy-D-xylulose 5-phosphate biosynthesis; 1-deoxy-D-xylulose 5-phosphate from D-glyceraldehyde 3-phosphate and pyruvate: step 1/1. Its function is as follows. Catalyzes the acyloin condensation reaction between C atoms 2 and 3 of pyruvate and glyceraldehyde 3-phosphate to yield 1-deoxy-D-xylulose-5-phosphate (DXP). The chain is 1-deoxy-D-xylulose-5-phosphate synthase from Citrobacter koseri (strain ATCC BAA-895 / CDC 4225-83 / SGSC4696).